The following is a 222-amino-acid chain: Nucleoside triphosphate pyrophosphatase (222 aa).

Asp82 serves as the catalytic Proton acceptor.

The protein belongs to the Maf family. A divalent metal cation is required as a cofactor.

Its subcellular location is the cytoplasm. It catalyses the reaction a ribonucleoside 5'-triphosphate + H2O = a ribonucleoside 5'-phosphate + diphosphate + H(+). It carries out the reaction a 2'-deoxyribonucleoside 5'-triphosphate + H2O = a 2'-deoxyribonucleoside 5'-phosphate + diphosphate + H(+). Its function is as follows. Nucleoside triphosphate pyrophosphatase. May have a dual role in cell division arrest and in preventing the incorporation of modified nucleotides into cellular nucleic acids. The chain is Nucleoside triphosphate pyrophosphatase from Mycobacterium bovis (strain ATCC BAA-935 / AF2122/97).